We begin with the raw amino-acid sequence, 158 residues long: UPF0716 protein FxsA (158 aa).

At Met1 to Glu16 the chain is on the cytoplasmic side. The helical transmembrane segment at Ile17–Ile37 threads the bilayer. The Periplasmic portion of the chain corresponds to Phe38–Leu78. A helical transmembrane segment spans residues Ile79–Leu99. Residues Leu100–Asp158 are Cytoplasmic-facing. The span at Gly125–Thr135 shows a compositional bias: gly residues. The segment at Gly125 to Asp158 is disordered. The segment covering Glu139–Asp158 has biased composition (basic and acidic residues).

The protein belongs to the UPF0716 (FxsA) family.

The protein localises to the cell inner membrane. Its function is as follows. Overexpression alleviates the exclusion of phage T7 in cells harboring the F plasmid. The polypeptide is UPF0716 protein FxsA (fxsA) (Escherichia coli (strain K12)).